A 97-amino-acid chain; its full sequence is Large ribosomal subunit protein uL23 (97 aa).

This sequence belongs to the universal ribosomal protein uL23 family. Part of the 50S ribosomal subunit. Contacts protein L29, and trigger factor when it is bound to the ribosome.

Its function is as follows. One of the early assembly proteins it binds 23S rRNA. One of the proteins that surrounds the polypeptide exit tunnel on the outside of the ribosome. Forms the main docking site for trigger factor binding to the ribosome. The chain is Large ribosomal subunit protein uL23 from Brucella canis (strain ATCC 23365 / NCTC 10854 / RM-666).